The chain runs to 66 residues: MLDPSIDSLMNKLDSKYTLVTVSARRAREMQMNKDAQIENPKSHKFVGKALEEIDAGLLTFEKENR.

This sequence belongs to the RNA polymerase subunit omega family. In terms of assembly, the RNAP catalytic core consists of 2 alpha, 1 beta, 1 beta' and 1 omega subunit. When a sigma factor is associated with the core the holoenzyme is formed, which can initiate transcription.

It catalyses the reaction RNA(n) + a ribonucleoside 5'-triphosphate = RNA(n+1) + diphosphate. Promotes RNA polymerase assembly. Latches the N- and C-terminal regions of the beta' subunit thereby facilitating its interaction with the beta and alpha subunits. This chain is DNA-directed RNA polymerase subunit omega, found in Bacillus licheniformis (strain ATCC 14580 / DSM 13 / JCM 2505 / CCUG 7422 / NBRC 12200 / NCIMB 9375 / NCTC 10341 / NRRL NRS-1264 / Gibson 46).